The sequence spans 212 residues: Thymidylate kinase (212 aa).

11–18 (GPEGAGKS) is an ATP binding site.

This sequence belongs to the thymidylate kinase family.

It catalyses the reaction dTMP + ATP = dTDP + ADP. Phosphorylation of dTMP to form dTDP in both de novo and salvage pathways of dTTP synthesis. This chain is Thymidylate kinase, found in Streptococcus sanguinis (strain SK36).